A 247-amino-acid chain; its full sequence is 2,3-bisphosphoglycerate-dependent phosphoglycerate mutase (247 aa).

Residues 8–15 (RHGESQWN), 21–22 (TG), Arg60, 87–90 (ERHY), Lys98, 114–115 (RR), and 183–184 (GN) each bind substrate. The Tele-phosphohistidine intermediate role is filled by His9. Catalysis depends on Glu87, which acts as the Proton donor/acceptor.

It belongs to the phosphoglycerate mutase family. BPG-dependent PGAM subfamily.

It carries out the reaction (2R)-2-phosphoglycerate = (2R)-3-phosphoglycerate. It participates in carbohydrate degradation; glycolysis; pyruvate from D-glyceraldehyde 3-phosphate: step 3/5. Functionally, catalyzes the interconversion of 2-phosphoglycerate and 3-phosphoglycerate. This chain is 2,3-bisphosphoglycerate-dependent phosphoglycerate mutase, found in Chlorobaculum tepidum (strain ATCC 49652 / DSM 12025 / NBRC 103806 / TLS) (Chlorobium tepidum).